Here is a 250-residue protein sequence, read N- to C-terminus: Cyclopentanol dehydrogenase (250 aa).

Residues M18, D37, D63, V64, N90, Y155, K159, I188, T190, and T193 each contribute to the NAD(+) site. Y155 acts as the Proton acceptor in catalysis.

The protein belongs to the short-chain dehydrogenases/reductases (SDR) family.

It catalyses the reaction cyclopentanol + NAD(+) = cyclopentanone + NADH + H(+). It carries out the reaction cyclohexanol + NAD(+) = cyclohexanone + NADH + H(+). The protein operates within alcohol metabolism; cyclopentanol degradation; 5-valerolactone from cyclopentanol: step 1/2. Catalyzes the oxidation of cyclopentanol to cyclopentanone and cyclohexanol to cyclohexanone. The activity toward cyclohexanol is 60% that of cyclopentanol. This is Cyclopentanol dehydrogenase from Comamonas sp. (strain NCIMB 9872).